The sequence spans 147 residues: UPF0178 protein VS_2364 (147 aa).

It belongs to the UPF0178 family.

In Vibrio atlanticus (strain LGP32) (Vibrio splendidus (strain Mel32)), this protein is UPF0178 protein VS_2364.